The chain runs to 264 residues: MQFKKSSIVSFLSLLGSLTKAAAEVRLVTMDGVVYSYQVVTSTIKPATTYVETIYYTTTYVEAVTLTNHAVTSTTRESVVTSTLSSTSLLPETTEESTQEDEQTTDFTSTTDVESTTDVTSTTAETATLEPTTSDETYTTELTPTTSVKTTLENDDSTSVITTKSTSKANTQSISRKTSTLTPTVTSETTESTSAETLSSTDKSTSTSSSSVLEPMVTNTDCQVVYEYTDDDEYYSTVEISGTESVDAATTYTKTRTVYATISS.

Residues 1-23 (MQFKKSSIVSFLSLLGSLTKAAA) form the signal peptide. The span at 75 to 92 (TRESVVTSTLSSTSLLPE) shows a compositional bias: low complexity. A disordered region spans residues 75-213 (TRESVVTSTL…STSTSSSSVL (139 aa)). Residues 93–104 (TTEESTQEDEQT) show a composition bias toward acidic residues. Composition is skewed to low complexity over residues 105–147 (TDFT…PTTS), 157–168 (STSVITTKSTSK), and 178–211 (TSTL…SSSS). D247 carries the GPI-anchor amidated aspartate lipid modification. The propeptide at 248–264 (AATTYTKTRTVYATISS) is removed in mature form.

The protein resides in the secreted. Its subcellular location is the cell wall. It is found in the membrane. Involved in pseudohyphal growth, cell wall metabolism and required for the separation of the mother and daughter cells. In Kluyveromyces lactis (strain ATCC 8585 / CBS 2359 / DSM 70799 / NBRC 1267 / NRRL Y-1140 / WM37) (Yeast), this protein is Protein DSE2 (DSE2).